We begin with the raw amino-acid sequence, 173 residues long: MPRSNRNDNFIDKSFTVMADLIVKLLPINARSKEAYVYYRDGLSAQNDGDYAEALENYEEALKLEENSTDRSETLKNMAIIYMSNGEEERAIETYRKALEENPNQPSCLKNMGLIYEKWGRIAEEGGEQDSADRWFDQAADVWTQAVRLNPGGYLDIENWLKSTGRSNVDVYF.

3 TPR repeats span residues 35–68, 72–105, and 120–153; these read AYVY…EENS, SETL…NPNQ, and GRIA…NPGG.

The protein belongs to the Ycf3 family.

The protein resides in the cellular thylakoid membrane. Its function is as follows. Essential for the assembly of the photosystem I (PSI) complex. May act as a chaperone-like factor to guide the assembly of the PSI subunits. This chain is Photosystem I assembly protein Ycf3, found in Synechococcus sp. (strain CC9605).